Consider the following 164-residue polypeptide: Phosphopantetheine adenylyltransferase (164 aa).

S9 contributes to the substrate binding site. Residues 9–10 (SF) and H17 contribute to the ATP site. Residues K41, L73, and R87 each contribute to the substrate site. Residues E98 and 122 to 128 (YSFLSSS) each bind ATP.

It belongs to the bacterial CoaD family. In terms of assembly, homohexamer. Requires Mg(2+) as cofactor.

Its subcellular location is the cytoplasm. The catalysed reaction is (R)-4'-phosphopantetheine + ATP + H(+) = 3'-dephospho-CoA + diphosphate. Its pathway is cofactor biosynthesis; coenzyme A biosynthesis; CoA from (R)-pantothenate: step 4/5. Its function is as follows. Reversibly transfers an adenylyl group from ATP to 4'-phosphopantetheine, yielding dephospho-CoA (dPCoA) and pyrophosphate. The protein is Phosphopantetheine adenylyltransferase of Thermobifida fusca (strain YX).